A 774-amino-acid polypeptide reads, in one-letter code: Transmembrane GTPase fzo-1 (774 aa).

The disordered stretch occupies residues 1-29; that stretch reads MSGTASLVHTLPASGDSNHRGLHSLKNSR. Residues 1–617 are Cytoplasmic-facing; the sequence is MSGTASLVHT…EEQAMMTQMV (617 aa). Residues 20-29 show a composition bias toward basic residues; sequence RGLHSLKNSR. Residues 51–71 are a coiled coil; it reads YGELKDNVAELEGVYKDIKEN. The region spanning 97 to 352 is the Dynamin-type G domain; that stretch reads QRDNMKVVFF…TRALEFQNFE (256 aa). Residues 107-114 form a G1 motif region; that stretch reads GRTSNGKS. GTP is bound at residue 110–115; the sequence is SNGKST. Residues 133–134 form a G2 motif region; sequence TT. Residues 211–214 form a G3 motif region; it reads DSPG. 270-273 provides a ligand contact to GTP; the sequence is NRWD. Residues 270-273 form a G4 motif region; the sequence is NRWD. Position 300 (Glu300) is a region of interest, G5 motif. Ser317 contributes to the GTP binding site. Residues 385–415 adopt a coiled-coil conformation; it reads NLNSVLTSAAEQRSKLQNNLNESTRTFNECR. The helical transmembrane segment at 618-638 threads the bilayer; that stretch reads LTSAAFLANGSLGVLVVGGIV. Residues 639–640 lie on the Mitochondrial intermembrane side of the membrane; sequence YK. Residues 641–661 form a helical membrane-spanning segment; that stretch reads AVGWRVIAVGGAAYAGLYAWE. At 662–774 the chain is on the cytoplasmic side; that stretch reads RMRWNSGAKE…YLRSDSPPTP (113 aa).

Belongs to the TRAFAC class dynamin-like GTPase superfamily. Dynamin/Fzo/YdjA family. Mitofusin subfamily. As to quaternary structure, interacts with ced-9; interaction may be suppressed by interaction of ced-9 with egl-1.

It localises to the mitochondrion outer membrane. The catalysed reaction is GTP + H2O = GDP + phosphate + H(+). Functionally, probable transmembrane GTPase. Mediates mitochondrial fusion. Fusion of mitochondria occurs in many cell types and constitutes an important step in mitochondria morphology, which is balanced between fusion and fission. Dispensable for normal apoptotic processes during embryonic development. This is Transmembrane GTPase fzo-1 from Caenorhabditis elegans.